The primary structure comprises 478 residues: tRNA(Ile)-lysidine synthase (478 aa).

27–32 (SGGSDS) provides a ligand contact to ATP.

This sequence belongs to the tRNA(Ile)-lysidine synthase family.

It is found in the cytoplasm. It catalyses the reaction cytidine(34) in tRNA(Ile2) + L-lysine + ATP = lysidine(34) in tRNA(Ile2) + AMP + diphosphate + H(+). Functionally, ligates lysine onto the cytidine present at position 34 of the AUA codon-specific tRNA(Ile) that contains the anticodon CAU, in an ATP-dependent manner. Cytidine is converted to lysidine, thus changing the amino acid specificity of the tRNA from methionine to isoleucine. The polypeptide is tRNA(Ile)-lysidine synthase (Rickettsia africae (strain ESF-5)).